The primary structure comprises 727 residues: Zinc metalloproteinase nas-38 (727 aa).

A signal peptide spans 1 to 25 (MPSPSYNRHIIIASCFCCLLIFSSA). Residues 26–114 (ARVPKASKKH…FTQGKREKRK (89 aa)) constitute a propeptide that is removed on maturation. The Peptidase M12A domain maps to 113–312 (RKIGRNPLYK…QAINMAYGCT (200 aa)). Disulfide bonds link Cys-158/Cys-311 and Cys-179/Cys-199. His-207 lines the Zn(2+) pocket. Glu-208 is an active-site residue. Zn(2+) contacts are provided by His-211 and His-217. An EGF-like domain is found at 306–345 (NMAYGCTESCADLPCLRNGYTHPNNCSMCACPEGLSGRYC). Asn-330 carries N-linked (GlcNAc...) asparagine glycosylation. The CUB domain maps to 353-469 (AQCGGVIFAT…AGFKAKFWSN (117 aa)). Intrachain disulfides connect Cys-355/Cys-383 and Cys-411/Cys-432. Disordered regions lie at residues 473 to 506 (PEGV…QSTT) and 532 to 561 (TPLT…TEPS). Positions 535-554 (TSSSTTTESTTVSSTTQSTT) are enriched in low complexity. A TSP type-1 domain is found at 610 to 658 (ECGCGAWSEWQGECSQQCGGCGHRLRKRECKKEACRKEEKRPCNFSACP). Cystine bridges form between Cys-611–Cys-644, Cys-623–Cys-652, Cys-627–Cys-657, and Cys-639–Cys-644. N-linked (GlcNAc...) asparagine glycosylation is found at Asn-653 and Asn-714.

Zn(2+) serves as cofactor. As to expression, expressed in the epidermis, the excretory canal cell, duct cell, pore cell, and excretory gland cell. Expressed in an oscillating pattern in epithelial cells with increased expression during the lethargus phase which occurs during molting between larval and adult stages. Not expressed in seam cells or in the RIS neuron.

It is found in the secreted. In terms of biological role, metalloprotease. As part of the innate immune response to molting and injury to the adult epidermis, positively regulates the activity of the transcription factor sta-2 to promote the expression of epidermal antimicrobial peptides such as nlp-29. Through regulating the expression of epidermal antimicrobial peptides such as nlp-29, modulates sleep duration and locomotion quiescence during the sleep-like state called lethargus which occurs during molting between larval and adult stages. This may occur through the sleep-active RIS neuron. This is Zinc metalloproteinase nas-38 from Caenorhabditis elegans.